A 211-amino-acid polypeptide reads, in one-letter code: Arginine exporter protein ArgO (211 aa).

Transmembrane regions (helical) follow at residues 1–21 (MFTY…PLGP), 37–57 (LMIA…GIFG), 68–88 (LLAI…FGAL), 111–131 (IIIT…DTFV), 147–167 (WFAL…ALLA), and 182–202 (IINI…AKEG).

The protein belongs to the LysE/ArgO transporter (TC 2.A.75) family.

The protein localises to the cell inner membrane. It carries out the reaction L-arginine(in) = L-arginine(out). In terms of biological role, involved in the export of arginine. Important to control the intracellular level of arginine and the correct balance between arginine and lysine. The polypeptide is Arginine exporter protein ArgO (Klebsiella pneumoniae (strain 342)).